The primary structure comprises 186 residues: Ribosome-recycling factor (186 aa).

It belongs to the RRF family.

It is found in the cytoplasm. Its function is as follows. Responsible for the release of ribosomes from messenger RNA at the termination of protein biosynthesis. May increase the efficiency of translation by recycling ribosomes from one round of translation to another. The chain is Ribosome-recycling factor from Brucella abortus (strain S19).